A 920-amino-acid chain; its full sequence is Phosphoenolpyruvate carboxylase (920 aa).

Residues His138 and Lys583 contribute to the active site.

It belongs to the PEPCase type 1 family. Mg(2+) serves as cofactor.

The catalysed reaction is oxaloacetate + phosphate = phosphoenolpyruvate + hydrogencarbonate. Forms oxaloacetate, a four-carbon dicarboxylic acid source for the tricarboxylic acid cycle. This chain is Phosphoenolpyruvate carboxylase, found in Streptococcus pyogenes serotype M1.